Consider the following 345-residue polypeptide: Aspartate--ammonia ligase (345 aa).

Belongs to the class-II aminoacyl-tRNA synthetase family. AsnA subfamily.

The protein localises to the cytoplasm. It catalyses the reaction L-aspartate + NH4(+) + ATP = L-asparagine + AMP + diphosphate + H(+). It functions in the pathway amino-acid biosynthesis; L-asparagine biosynthesis; L-asparagine from L-aspartate (ammonia route): step 1/1. This is Aspartate--ammonia ligase from Bacteroides fragilis (strain ATCC 25285 / DSM 2151 / CCUG 4856 / JCM 11019 / LMG 10263 / NCTC 9343 / Onslow / VPI 2553 / EN-2).